Reading from the N-terminus, the 193-residue chain is Molybdenum cofactor guanylyltransferase (193 aa).

GTP contacts are provided by residues 8–10 (LAG), Lys21, Asp67, and Asp98. Asp98 provides a ligand contact to Mg(2+).

The protein belongs to the MobA family. Monomer. Mg(2+) is required as a cofactor.

The protein resides in the cytoplasm. It catalyses the reaction Mo-molybdopterin + GTP + H(+) = Mo-molybdopterin guanine dinucleotide + diphosphate. In terms of biological role, transfers a GMP moiety from GTP to Mo-molybdopterin (Mo-MPT) cofactor (Moco or molybdenum cofactor) to form Mo-molybdopterin guanine dinucleotide (Mo-MGD) cofactor. In Cereibacter sphaeroides (strain ATCC 17029 / ATH 2.4.9) (Rhodobacter sphaeroides), this protein is Molybdenum cofactor guanylyltransferase.